Consider the following 231-residue polypeptide: GDSL lipase Rv0518 (231 aa).

Positions 1-20 (MSRPGTYVIGLTLLVGLVVG) are cleaved as a signal peptide. Residue Ser-46 is the Nucleophile of the active site. The Proton donor role is filled by Asp-205. His-208 (proton acceptor) is an active-site residue.

Belongs to the 'GDSL' lipolytic enzyme family.

The protein resides in the secreted. It is found in the cell wall. The protein localises to the extracellular space. The catalysed reaction is a fatty acid ester + H2O = an aliphatic alcohol + a fatty acid + H(+). It carries out the reaction decanoate ester + H2O = decanoate + an aliphatic alcohol + H(+). The enzyme catalyses an octanoate ester + H2O = an aliphatic alcohol + octanoate + H(+). It catalyses the reaction a dodecanoate ester + H2O = an aliphatic alcohol + dodecanoate + H(+). The catalysed reaction is a tetradecanoate ester + H2O = an aliphatic alcohol + tetradecanoate + H(+). With respect to regulation, activity is inhibited by the serine modifier phenylmethylsulfonyl fluoride (PMSF). Its function is as follows. GDSL lipase that catalyzes the hydrolysis of p-nitrophenyl (pNP) esters. pNP-decanoate (C10) is the preferred substrate. It can also use pNP-octanoate (C8), pNP-dodecanoate (C12) and pNP-tetradecanoate (C14). Has lower activity with pNP-butyrate (C4), pNP-palmitate (C16) and pNP-stearate (C18). Does not show phospholipase A1 activity. Might help bacteria to utilize available lipids for its growth as well as provide resistance to various intracellular stresses by cell wall modulation resulting in enhanced intracellular survival. The chain is GDSL lipase Rv0518 from Mycobacterium tuberculosis (strain ATCC 25618 / H37Rv).